The following is a 236-amino-acid chain: Eukaryotic translation initiation factor 3 subunit J (236 aa).

The segment at 1–86 is disordered; the sequence is MADDWESAAD…KEEEEQKRLA (86 aa). The segment covering 28 to 46 has biased composition (acidic residues); the sequence is GEDDDEDVKESWEDEEEKK. 2 stretches are compositionally biased toward basic and acidic residues: residues 47 to 58 and 68 to 86; these read DEEKPTKTEAPV and AKLEEQERLKEEEEQKRLA. Residues 61 to 115 adopt a coiled-coil conformation; sequence KPNKALKAKLEEQERLKEEEEQKRLAEMTPEEKLAEKLRLQKIQEESDLKSALET.

Belongs to the eIF-3 subunit J family. Component of the eukaryotic translation initiation factor 3 (eIF-3) complex. The eIF-3 complex interacts with pix.

It is found in the cytoplasm. In terms of biological role, component of the eukaryotic translation initiation factor 3 (eIF-3) complex, which is involved in protein synthesis of a specialized repertoire of mRNAs and, together with other initiation factors, stimulates binding of mRNA and methionyl-tRNAi to the 40S ribosome. The eIF-3 complex specifically targets and initiates translation of a subset of mRNAs involved in cell proliferation. The chain is Eukaryotic translation initiation factor 3 subunit J from Drosophila mojavensis (Fruit fly).